Reading from the N-terminus, the 349-residue chain is Isopentenyl-diphosphate delta-isomerase (349 aa).

Position 9-10 (9-10) interacts with substrate; sequence RK. Residues 65–67, serine 95, and asparagine 124 contribute to the FMN site; that span reads AMT. 95-97 contacts substrate; it reads STH. Glutamine 154 is a substrate binding site. Glutamate 155 provides a ligand contact to Mg(2+). FMN is bound by residues lysine 186, serine 211, threonine 216, 262 to 264, and 283 to 284; these read GLR and SR.

This sequence belongs to the IPP isomerase type 2 family. Homooctamer. Dimer of tetramers. Requires FMN as cofactor. It depends on NADPH as a cofactor. Mg(2+) is required as a cofactor.

It is found in the cytoplasm. It catalyses the reaction isopentenyl diphosphate = dimethylallyl diphosphate. Involved in the biosynthesis of isoprenoids. Catalyzes the 1,3-allylic rearrangement of the homoallylic substrate isopentenyl (IPP) to its allylic isomer, dimethylallyl diphosphate (DMAPP). This is Isopentenyl-diphosphate delta-isomerase from Staphylococcus aureus (strain MSSA476).